A 170-amino-acid chain; its full sequence is Shikimate kinase (170 aa).

15-20 (GTGKTT) lines the ATP pocket. T19 serves as a coordination point for Mg(2+). Positions 37, 61, and 82 each coordinate substrate. R120 serves as a coordination point for ATP. R138 lines the substrate pocket. Q154 is a binding site for ATP.

It belongs to the shikimate kinase family. In terms of assembly, monomer. The cofactor is Mg(2+).

The protein resides in the cytoplasm. It catalyses the reaction shikimate + ATP = 3-phosphoshikimate + ADP + H(+). It functions in the pathway metabolic intermediate biosynthesis; chorismate biosynthesis; chorismate from D-erythrose 4-phosphate and phosphoenolpyruvate: step 5/7. Its function is as follows. Catalyzes the specific phosphorylation of the 3-hydroxyl group of shikimic acid using ATP as a cosubstrate. This is Shikimate kinase from Staphylococcus epidermidis (strain ATCC 35984 / DSM 28319 / BCRC 17069 / CCUG 31568 / BM 3577 / RP62A).